We begin with the raw amino-acid sequence, 67 residues long: DNA-directed RNA polymerase subunit omega (67 aa).

It belongs to the RNA polymerase subunit omega family. As to quaternary structure, the RNAP catalytic core consists of 2 alpha, 1 beta, 1 beta' and 1 omega subunit. When a sigma factor is associated with the core the holoenzyme is formed, which can initiate transcription.

The catalysed reaction is RNA(n) + a ribonucleoside 5'-triphosphate = RNA(n+1) + diphosphate. In terms of biological role, promotes RNA polymerase assembly. Latches the N- and C-terminal regions of the beta' subunit thereby facilitating its interaction with the beta and alpha subunits. This Bordetella petrii (strain ATCC BAA-461 / DSM 12804 / CCUG 43448) protein is DNA-directed RNA polymerase subunit omega.